The primary structure comprises 129 residues: Small ribosomal subunit protein uS11 (129 aa).

Belongs to the universal ribosomal protein uS11 family. Part of the 30S ribosomal subunit. Interacts with proteins S7 and S18. Binds to IF-3.

Functionally, located on the platform of the 30S subunit, it bridges several disparate RNA helices of the 16S rRNA. Forms part of the Shine-Dalgarno cleft in the 70S ribosome. The protein is Small ribosomal subunit protein uS11 of Vibrio atlanticus (strain LGP32) (Vibrio splendidus (strain Mel32)).